We begin with the raw amino-acid sequence, 3411 residues long: Genome polyprotein (3411 aa).

At 1-104 the chain is on the cytoplasmic side; the sequence is MSGRKAQGKT…LSSRKRRSHD (104 aa). Positions 38-72 are hydrophobic; homodimerization of capsid protein C; sequence PGPSRGVQGFIFFFLFNILTGKKITAHLKRLWKML. Residues 102–121 constitute a propeptide, ER anchor for the capsid protein C, removed in mature form by serine protease NS3; it reads SHDVLTVQFLILGMLLMTGG. Residues 105 to 125 form a helical membrane-spanning segment; it reads VLTVQFLILGMLLMTGGVTLV. Residues 126–244 are Extracellular-facing; the sequence is RKNRWLLLNV…GERQLQKIER (119 aa). Asparagine 134 and asparagine 150 each carry an N-linked (GlcNAc...) asparagine; by host glycan. A helical membrane pass occupies residues 245–265; it reads WFVRNPFFAVTALTIAYLVGS. At 266–270 the chain is on the cytoplasmic side; it reads NMTQR. The chain crosses the membrane as a helical span at residues 271–285; it reads VVIALLVLAVGPAYS. Residues 286-730 lie on the Extracellular side of the membrane; sequence AHCIGITDRD…TVFGSAFQGL (445 aa). 8 disulfides stabilise this stretch: cysteine 288-cysteine 315, cysteine 345-cysteine 401, cysteine 345-cysteine 406, cysteine 359-cysteine 390, cysteine 377-cysteine 401, cysteine 377-cysteine 406, cysteine 467-cysteine 568, and cysteine 585-cysteine 615. The segment at 383-396 is fusion peptide; that stretch reads DRGWGNGCGLFGKG. Residues 731-751 traverse the membrane as a helical segment; that stretch reads FGGLNWITKVIMGAVLIWVGI. Topologically, residues 752-757 are extracellular; sequence NTRNMT. The helical transmembrane segment at 758–778 threads the bilayer; that stretch reads MSMSMILVGVIMMFLSLGVGA. Over 779-1132 the chain is Extracellular; sequence DQGCAINFGK…LVRSWVTAGE (354 aa). 6 cysteine pairs are disulfide-bonded: cysteine 782–cysteine 793, cysteine 833–cysteine 921, cysteine 957–cysteine 1002, cysteine 1058–cysteine 1107, cysteine 1069–cysteine 1091, and cysteine 1090–cysteine 1094. 2 N-linked (GlcNAc...) asparagine; by host glycosylation sites follow: asparagine 908 and asparagine 986. A helical membrane pass occupies residues 1133–1153; the sequence is IHAVPFGLVSMMIAMEVVLRK. Over 1154 to 1201 the chain is Cytoplasmic; sequence RQGPKQMLVGGVVLLGAMLVGQVTLLDLLKLTVAVGLHFHEMNNGGDA. A helical membrane pass occupies residues 1202–1222; that stretch reads MYMALIAAFSIRPGLLIGFGL. The Lumenal portion of the chain corresponds to 1223-1287; that stretch reads RTLWSPRERL…ILPLMALLTP (65 aa). Residues 1288 to 1308 traverse the membrane as a helical segment; sequence VTMAEVRLAAMFFCAVVIIGV. Topologically, residues 1309–1355 are cytoplasmic; sequence LHQNFKDTSMQKTIPLVALTLTSYLGLTQPFLGLCAFLATRIFGRRS. The chain crosses the membrane as a helical span at residues 1356–1376; it reads IPVNEALAAAGLVGVLAGLAF. Topologically, residues 1377 to 1378 are lumenal; it reads QE. A helical transmembrane segment spans residues 1379–1399; it reads MENFLGPIAVGGLLMMLVSVA. Topologically, residues 1400–1456 are cytoplasmic; sequence GRVDGLELKKLGEVSWEEEAEISGSSARYDVALSEQGEFKLLSEEKVPWDQVVMTSL. Residues 1407 to 1446 form an interacts with and activates NS3 protease region; that stretch reads LKKLGEVSWEEEAEISGSSARYDVALSEQGEFKLLSEEKV. An intramembrane region (helical) is located at residues 1457–1477; sequence ALVGAALHPFALLLVLAGWLF. Topologically, residues 1478–2157 are cytoplasmic; sequence HVRGARRSGD…RNALSMMPEA (680 aa). A Peptidase S7 domain is found at 1485 to 1665; it reads SGDVLWDIPT…EVKEEGKEEL (181 aa). Active-site charge relay system; for serine protease NS3 activity residues include histidine 1537, aspartate 1561, and serine 1622. A Helicase ATP-binding domain is found at 1669 to 1825; that stretch reads PTMLKKGMTT…HSNGEIEDVQ (157 aa). Residues 1673–1676 form an important for RNA-binding region; that stretch reads KKGM. 1682–1689 is a binding site for ATP; it reads FHPGAGKT. Positions 1773-1776 match the DEAH box motif; sequence DEAH. The Helicase C-terminal domain occupies 1820–1997; sequence EIEDVQTDIP…VRGGMVAPLY (178 aa). At lysine 1877 the chain carries N6-acetyllysine; by host. A helical membrane pass occupies residues 2158-2178; the sequence is MTIVMLFILAGLLTSGMVIFF. Residues 2179 to 2186 are Lumenal-facing; the sequence is MSPKGISR. The helical intramembrane region spans 2187 to 2207; sequence MSMAMGTMAGCGYLMFLGGVK. At 2208–2209 the chain is on the lumenal side; that stretch reads PT. The helical transmembrane segment at 2210-2230 threads the bilayer; it reads HISYVMLIFFVLMVVVIPEPG. Over 2231–2241 the chain is Cytoplasmic; that stretch reads QQRSIQDNQVA. Residues 2242 to 2262 form a helical membrane-spanning segment; the sequence is YLIIGILTLVSAVAANELGML. The Lumenal portion of the chain corresponds to 2263 to 2293; it reads EKTKEDLFGKKNLIPSSASPWSWPDLDLKPG. The helical intramembrane region spans 2294 to 2314; the sequence is AAWTVYVGIVTMLSPMLHHWI. The Lumenal segment spans residues 2315 to 2360; it reads KVEYGNLSLSGIAQSASVLSFMDKGIPFMKMNISVIMLLVSGWNSI. The helical transmembrane segment at 2361-2381 threads the bilayer; that stretch reads TVMPLLCGIGCAMLHWSLILP. Topologically, residues 2382-2421 are cytoplasmic; that stretch reads GIKAQQSKLAQRRVFHGVAENPVVDGNPTVDIEEAPEMPA. Residues 2422 to 2442 traverse the membrane as a helical segment; that stretch reads LYEKKLALYLLLALSLASVAM. Topologically, residues 2443–2445 are lumenal; it reads CRT. The helical transmembrane segment at 2446 to 2466 threads the bilayer; sequence PFSLAEGIVLASAALGPLIEG. Residues 2467–3411 are Cytoplasmic-facing; the sequence is NTSLLWNGPM…DADLQLGELI (945 aa). The region spanning 2507–2771 is the mRNA cap 0-1 NS5-type MT domain; it reads GSANGKTLGE…DVILPIGTRS (265 aa). Serine 2562 contributes to the S-adenosyl-L-methionine binding site. The residue at position 2562 (serine 2562) is a Phosphoserine. Lysine 2567 (for 2'-O-MTase activity) is an active-site residue. S-adenosyl-L-methionine contacts are provided by glycine 2592, tryptophan 2593, threonine 2610, leucine 2611, aspartate 2637, and isoleucine 2638. Aspartate 2652 functions as the For 2'-O-MTase activity in the catalytic mechanism. An S-adenosyl-L-methionine-binding site is contributed by isoleucine 2653. Catalysis depends on for 2'-O-MTase activity residues lysine 2688 and glutamate 2724. Tyrosine 2726 is an S-adenosyl-L-methionine binding site. The Nuclear localization signal signature appears at 2878 to 2911; the sequence is RKIMKVVNRWLFRHLAREKNPRLCTKEEFIAKVR. Positions 2945, 2949, 2954, and 2957 each coordinate Zn(2+). The RdRp catalytic domain maps to 3035-3187; sequence GGFYADDTAG…RPIDDRFGLA (153 aa). 3 residues coordinate Zn(2+): histidine 3222, cysteine 3238, and cysteine 3357.

This sequence in the N-terminal section; belongs to the class I-like SAM-binding methyltransferase superfamily. mRNA cap 0-1 NS5-type methyltransferase family. In terms of assembly, homodimer. Interacts (via N-terminus) with host EXOC1 (via C-terminus); this interaction results in EXOC1 degradation through the proteasome degradation pathway. As to quaternary structure, forms heterodimers with envelope protein E in the endoplasmic reticulum and Golgi. Homodimer; in the endoplasmic reticulum and Golgi. Interacts with protein prM. Interacts with non-structural protein 1. In terms of assembly, homodimer; Homohexamer when secreted. Interacts with envelope protein E. As to quaternary structure, interacts (via N-terminus) with serine protease NS3. Forms a heterodimer with serine protease NS3. May form homooligomers. In terms of assembly, forms a heterodimer with NS2B. Interacts with non-structural protein 2A (via N-terminus). Interacts with NS4B. Interacts with unphosphorylated RNA-directed RNA polymerase NS5; this interaction stimulates RNA-directed RNA polymerase NS5 guanylyltransferase activity. NS3 interacts with host PDCD6IP; this interaction contributes to virion release. As to quaternary structure, interacts with serine protease NS3. Homodimer. Interacts with host STAT2; this interaction prevents the establishment of cellular antiviral state. Interacts with serine protease NS3. Interacts with host TRIM23; this interaction leads to NS5 ubiquitination. Post-translationally, specific enzymatic cleavages in vivo yield mature proteins. The nascent capsid protein C contains a C-terminal hydrophobic domain that act as a signal sequence for translocation of prM into the lumen of the ER. Mature capsid protein C is cleaved at a site upstream of this hydrophobic domain by NS3. prM is cleaved in post-Golgi vesicles by a host furin, releasing the mature small envelope protein M, and peptide pr. Non-structural protein 2A-alpha, a C-terminally truncated form of non-structural protein 2A, results from partial cleavage by NS3. Specific enzymatic cleavages in vivo yield mature proteins peptide 2K acts as a signal sequence and is removed from the N-terminus of NS4B by the host signal peptidase in the ER lumen. Signal cleavage at the 2K-4B site requires a prior NS3 protease-mediated cleavage at the 4A-2K site. Cleaved in post-Golgi vesicles by a host furin, releasing the mature small envelope protein M, and peptide pr. This cleavage is incomplete as up to 30% of viral particles still carry uncleaved prM. In terms of processing, N-glycosylated. Post-translationally, N-glycosylated. The excreted form is glycosylated and this is required for efficient secretion of the protein from infected cells. Polyubiquitinated; ubiquitination is probably mediated by host TRIM23 and is prerequisite for NS5-STAT2 interaction. NS5 is not ISGylated or sumoylated. In terms of processing, acetylated by host KAT5. Acetylation modulates NS3 RNA-binding and unwinding activities and plays an important positive role for viral replication. Post-translationally, phosphorylated on serines residues. This phosphorylation may trigger NS5 nuclear localization.

The protein localises to the virion. It localises to the host nucleus. Its subcellular location is the host cytoplasm. The protein resides in the host perinuclear region. It is found in the secreted. The protein localises to the virion membrane. It localises to the host endoplasmic reticulum membrane. The enzyme catalyses Selective hydrolysis of -Xaa-Xaa-|-Yaa- bonds in which each of the Xaa can be either Arg or Lys and Yaa can be either Ser or Ala.. It catalyses the reaction RNA(n) + a ribonucleoside 5'-triphosphate = RNA(n+1) + diphosphate. The catalysed reaction is a ribonucleoside 5'-triphosphate + H2O = a ribonucleoside 5'-diphosphate + phosphate + H(+). It carries out the reaction ATP + H2O = ADP + phosphate + H(+). The enzyme catalyses a 5'-end (5'-triphosphoguanosine)-ribonucleoside in mRNA + S-adenosyl-L-methionine = a 5'-end (N(7)-methyl 5'-triphosphoguanosine)-ribonucleoside in mRNA + S-adenosyl-L-homocysteine. It catalyses the reaction a 5'-end (N(7)-methyl 5'-triphosphoguanosine)-ribonucleoside in mRNA + S-adenosyl-L-methionine = a 5'-end (N(7)-methyl 5'-triphosphoguanosine)-(2'-O-methyl-ribonucleoside) in mRNA + S-adenosyl-L-homocysteine + H(+). Its function is as follows. Plays a role in virus budding by binding to the cell membrane and gathering the viral RNA into a nucleocapsid that forms the core of a mature virus particle. During virus entry, may induce genome penetration into the host cytoplasm after hemifusion induced by the surface proteins. Can migrate to the cell nucleus where it modulates host functions. Inhibits RNA silencing by interfering with host Dicer. In terms of biological role, prevents premature fusion activity of envelope proteins in trans-Golgi by binding to envelope protein E at pH6.0. After virion release in extracellular space, gets dissociated from E dimers. Functionally, acts as a chaperone for envelope protein E during intracellular virion assembly by masking and inactivating envelope protein E fusion peptide. prM is the only viral peptide matured by host furin in the trans-Golgi network probably to avoid catastrophic activation of the viral fusion activity in acidic Golgi compartment prior to virion release. prM-E cleavage is inefficient, and many virions are only partially matured. These uncleaved prM would play a role in immune evasion. Its function is as follows. May play a role in virus budding. Exerts cytotoxic effects by activating a mitochondrial apoptotic pathway through M ectodomain. May display a viroporin activity. Binds to host cell surface receptor and mediates fusion between viral and cellular membranes. Envelope protein is synthesized in the endoplasmic reticulum in the form of heterodimer with protein prM. They play a role in virion budding in the ER, and the newly formed immature particle is covered with 60 spikes composed of heterodimer between precursor prM and envelope protein E. The virion is transported to the Golgi apparatus where the low pH causes dissociation of PrM-E heterodimers and formation of E homodimers. prM-E cleavage is inefficient, and many virions are only partially matured. These uncleaved prM would play a role in immune evasion. In terms of biological role, involved in immune evasion, pathogenesis and viral replication. Once cleaved off the polyprotein, is targeted to three destinations: the viral replication cycle, the plasma membrane and the extracellular compartment. Essential for viral replication. Required for formation of the replication complex and recruitment of other non-structural proteins to the ER-derived membrane structures. Excreted as a hexameric lipoparticle that plays a role against host immune response. Antagonizing the complement function. Binds to the host macrophages and dendritic cells. Inhibits signal transduction originating from Toll-like receptor 3 (TLR3). Functionally, component of the viral RNA replication complex that functions in virion assembly and antagonizes the host immune response. Its function is as follows. Required cofactor for the serine protease function of NS3. May have membrane-destabilizing activity and form viroporins. Displays three enzymatic activities: serine protease, NTPase and RNA helicase. NS3 serine protease, in association with NS2B, performs its autocleavage and cleaves the polyprotein at dibasic sites in the cytoplasm: C-prM, NS2A-NS2B, NS2B-NS3, NS3-NS4A, NS4A-2K and NS4B-NS5. NS3 RNA helicase binds RNA and unwinds dsRNA in the 3' to 5' direction. Also plays a role in virus assembly. In terms of biological role, regulates the ATPase activity of the NS3 helicase activity. NS4A allows NS3 helicase to conserve energy during unwinding. Functionally, functions as a signal peptide for NS4B and is required for the interferon antagonism activity of the latter. Its function is as follows. Induces the formation of ER-derived membrane vesicles where the viral replication takes place. Inhibits interferon (IFN)-induced host STAT1 phosphorylation and nuclear translocation, thereby preventing the establishment of cellular antiviral state by blocking the IFN-alpha/beta pathway. Replicates the viral (+) and (-) RNA genome, and performs the capping of genomes in the cytoplasm. NS5 methylates viral RNA cap at guanine N-7 and ribose 2'-O positions. Besides its role in RNA genome replication, also prevents the establishment of cellular antiviral state by blocking the interferon-alpha/beta (IFN-alpha/beta) signaling pathway. IFN-I induces binding of NS5 to host IFN-activated transcription factor STAT2, preventing its transcriptional activity. Host TRIM23 is the E3 ligase that interacts with and polyubiquitinates NS5 to promote its binding to STAT2 and trigger IFN-I signaling inhibition. The polypeptide is Genome polyprotein (Aedes aegypti (Yellowfever mosquito)).